Reading from the N-terminus, the 226-residue chain is Ribonuclease 3 (226 aa).

Residues 5–127 (IFQRGDPIGH…IVAAIYLDCG (123 aa)) enclose the RNase III domain. Glu-40 is a Mg(2+) binding site. Asp-44 is a catalytic residue. The Mg(2+) site is built by Asp-113 and Glu-116. Glu-116 is an active-site residue. One can recognise a DRBM domain in the interval 154–224 (DPKTRLQEWL…ATLVIAQLDS (71 aa)).

This sequence belongs to the ribonuclease III family. Homodimer. Mg(2+) serves as cofactor.

The protein resides in the cytoplasm. The enzyme catalyses Endonucleolytic cleavage to 5'-phosphomonoester.. Digests double-stranded RNA. Involved in the processing of primary rRNA transcript to yield the immediate precursors to the large and small rRNAs (23S and 16S). Processes some mRNAs, and tRNAs when they are encoded in the rRNA operon. Processes pre-crRNA and tracrRNA of type II CRISPR loci if present in the organism. In Xanthomonas oryzae pv. oryzae (strain KACC10331 / KXO85), this protein is Ribonuclease 3.